We begin with the raw amino-acid sequence, 167 residues long: SsrA-binding protein (167 aa).

It belongs to the SmpB family.

The protein resides in the cytoplasm. Required for rescue of stalled ribosomes mediated by trans-translation. Binds to transfer-messenger RNA (tmRNA), required for stable association of tmRNA with ribosomes. tmRNA and SmpB together mimic tRNA shape, replacing the anticodon stem-loop with SmpB. tmRNA is encoded by the ssrA gene; the 2 termini fold to resemble tRNA(Ala) and it encodes a 'tag peptide', a short internal open reading frame. During trans-translation Ala-aminoacylated tmRNA acts like a tRNA, entering the A-site of stalled ribosomes, displacing the stalled mRNA. The ribosome then switches to translate the ORF on the tmRNA; the nascent peptide is terminated with the 'tag peptide' encoded by the tmRNA and targeted for degradation. The ribosome is freed to recommence translation, which seems to be the essential function of trans-translation. The chain is SsrA-binding protein from Stenotrophomonas maltophilia (strain K279a).